We begin with the raw amino-acid sequence, 252 residues long: Flap endonuclease Xni (252 aa).

Aspartate 103 contacts Mg(2+). Positions 159 to 248 (VLPEQLPDYW…LKGNLQQLRL (90 aa)) constitute a 5'-3' exonuclease domain. Residues leucine 170, alanine 171, proline 179, isoleucine 181, and isoleucine 184 each coordinate K(+). An interaction with DNA region spans residues 183-188 (GIGPKT).

The protein belongs to the Xni family. The cofactor is Mg(2+). It depends on K(+) as a cofactor.

Has flap endonuclease activity. During DNA replication, flap endonucleases cleave the 5'-overhanging flap structure that is generated by displacement synthesis when DNA polymerase encounters the 5'-end of a downstream Okazaki fragment. This chain is Flap endonuclease Xni, found in Photorhabdus laumondii subsp. laumondii (strain DSM 15139 / CIP 105565 / TT01) (Photorhabdus luminescens subsp. laumondii).